The following is a 430-amino-acid chain: Tol-Pal system protein TolB (430 aa).

The signal sequence occupies residues 1–21; that stretch reads MKQALRVAFGFLMLWAAVLHA.

This sequence belongs to the TolB family. As to quaternary structure, the Tol-Pal system is composed of five core proteins: the inner membrane proteins TolA, TolQ and TolR, the periplasmic protein TolB and the outer membrane protein Pal. They form a network linking the inner and outer membranes and the peptidoglycan layer.

Its subcellular location is the periplasm. Part of the Tol-Pal system, which plays a role in outer membrane invagination during cell division and is important for maintaining outer membrane integrity. TolB occupies a key intermediary position in the Tol-Pal system because it communicates directly with both membrane-embedded components, Pal in the outer membrane and TolA in the inner membrane. This is Tol-Pal system protein TolB from Klebsiella pneumoniae (strain 342).